Here is a 457-residue protein sequence, read N- to C-terminus: Argininosuccinate lyase (457 aa).

It belongs to the lyase 1 family. Argininosuccinate lyase subfamily.

It is found in the cytoplasm. The enzyme catalyses 2-(N(omega)-L-arginino)succinate = fumarate + L-arginine. Its pathway is amino-acid biosynthesis; L-arginine biosynthesis; L-arginine from L-ornithine and carbamoyl phosphate: step 3/3. This Pasteurella multocida (strain Pm70) protein is Argininosuccinate lyase.